The sequence spans 534 residues: Ulvan lyase NLR42 (534 aa).

A signal peptide spans 1–47; it reads MVFFKDLFIFKSLIKGSLYSGHMKKKLLNYLPLFALMLFTVSMMAQT. Residues cysteine 59 and cysteine 89 are joined by a disulfide bond. The Ca(2+) site is built by glycine 63, asparagine 68, aspartate 86, threonine 88, alanine 91, and aspartate 92. A substrate-binding site is contributed by tyrosine 164. The active-site Proton acceptor is the lysine 169. Residues 218 to 223 and 288 to 291 contribute to the substrate site; these read SGAAGR and YRVK. The active-site Proton donor/acceptor is tyrosine 288. The interval 316–449 is ulvan-binding domain; the sequence is PAADIYRIKN…SKWNLESTTL (134 aa). Residues 450–534 constitute a propeptide, removed by the type IX secretion system (T9SS); that stretch reads SVDSQQIASV…KVYQTKLIVN (85 aa).

It belongs to the polysaccharide lyase 28 family. Ca(2+) serves as cofactor.

The protein localises to the secreted. Its function is as follows. Ulvan lyase involved in ulvan degradation. Ulvan is the main polysaccharide component of the Ulvales (green seaweed) cell wall. It is composed of disaccharide building blocks comprising 3-sulfated rhamnose (Rha3S) linked to D-glucuronic acid (GlcA), L-iduronic acid (IduA), or D-xylose (Xyl). Ulvan lyase catalyzes the endolytic cleavage of the glycosidic bond between Rha3S and the uronic acids GlcA or IduA, producing oligosaccharides that have unsaturated 4-deoxy-L-threo-hex-4-enopyranosiduronic acid (deltaUA) at the non-reducing end. This results eventually in the degradation of the ulvan polysaccharide into deltaUA-Rha3S disaccharides and deltaUA-Rha3S-Xyl-Rha3S tetrasaccharides. This chain is Ulvan lyase NLR42, found in Nonlabens ulvanivorans (Persicivirga ulvanivorans).